The primary structure comprises 341 residues: L-threonine 3-dehydrogenase (341 aa).

Position 38 (Cys-38) interacts with Zn(2+). Active-site charge relay system residues include Thr-40 and His-43. The Zn(2+) site is built by His-63, Glu-64, Cys-93, Cys-96, Cys-99, and Cys-107. NAD(+) is bound by residues Ile-175, Asp-195, Arg-200, 262–264, and 286–287; these read LGI and IY.

Belongs to the zinc-containing alcohol dehydrogenase family. Homotetramer. Zn(2+) serves as cofactor.

Its subcellular location is the cytoplasm. It catalyses the reaction L-threonine + NAD(+) = (2S)-2-amino-3-oxobutanoate + NADH + H(+). Its pathway is amino-acid degradation; L-threonine degradation via oxydo-reductase pathway; glycine from L-threonine: step 1/2. In terms of biological role, catalyzes the NAD(+)-dependent oxidation of L-threonine to 2-amino-3-ketobutyrate. In Shewanella pealeana (strain ATCC 700345 / ANG-SQ1), this protein is L-threonine 3-dehydrogenase.